The sequence spans 585 residues: A-type ATP synthase subunit A (585 aa).

Residue 231–238 (GPFGSGKT) coordinates ATP.

Belongs to the ATPase alpha/beta chains family. In terms of assembly, has multiple subunits with at least A(3), B(3), C, D, E, F, H, I and proteolipid K(x).

The protein resides in the cell membrane. It catalyses the reaction ATP + H2O + 4 H(+)(in) = ADP + phosphate + 5 H(+)(out). Its function is as follows. Component of the A-type ATP synthase that produces ATP from ADP in the presence of a proton gradient across the membrane. The A chain is the catalytic subunit. This is A-type ATP synthase subunit A from Thermococcus gammatolerans (strain DSM 15229 / JCM 11827 / EJ3).